The sequence spans 310 residues: Choline trimethylamine-lyase activating enzyme (310 aa).

The region spanning Tyr-17–Pro-304 is the Radical SAM core domain. [4Fe-4S] cluster-binding residues include Cys-31, Cys-35, Cys-38, Cys-57, Cys-60, Cys-63, and Cys-99. Position 37–39 (Trp-37–Ser-39) interacts with S-adenosyl-L-methionine. 2 4Fe-4S ferredoxin-type domains span residues Tyr-48–Ser-77 and Leu-79–Glu-109. Residues Gly-139, Asp-188 to Lys-190, and His-264 contribute to the S-adenosyl-L-methionine site.

It belongs to the organic radical-activating enzymes family. In terms of assembly, monomer. It depends on [4Fe-4S] cluster as a cofactor.

The enzyme catalyses glycyl-[protein] + reduced [flavodoxin] + S-adenosyl-L-methionine = glycin-2-yl radical-[protein] + semiquinone [flavodoxin] + 5'-deoxyadenosine + L-methionine + H(+). Its pathway is amine and polyamine metabolism; choline degradation. Functionally, catalyzes activation of the choline trimethylamine-lyase CutC under anaerobic conditions by generation of an organic free radical on a glycine residue, via a homolytic cleavage of S-adenosyl-L-methionine (SAM). Is involved in the anaerobic choline utilization pathway that allows D.alaskensis to grow on choline as a source of carbon and energy. The chain is Choline trimethylamine-lyase activating enzyme from Oleidesulfovibrio alaskensis (strain ATCC BAA-1058 / DSM 17464 / G20) (Desulfovibrio alaskensis).